We begin with the raw amino-acid sequence, 443 residues long: Na(+)-translocating ferredoxin:NAD(+) oxidoreductase complex subunit C (443 aa).

2 4Fe-4S ferredoxin-type domains span residues 359-391 and 398-428; these read ESAK…IAEY and DKCE…VSSI. Residues cysteine 369, cysteine 372, cysteine 375, cysteine 379, cysteine 408, cysteine 411, cysteine 414, and cysteine 418 each contribute to the [4Fe-4S] cluster site.

The protein belongs to the 4Fe4S bacterial-type ferredoxin family. RnfC subfamily. As to quaternary structure, the complex is composed of six subunits: RnfA, RnfB, RnfC, RnfD, RnfE and RnfG. Requires [4Fe-4S] cluster as cofactor.

The protein resides in the cell membrane. The enzyme catalyses 2 reduced [2Fe-2S]-[ferredoxin] + Na(+)(in) + NAD(+) + H(+) = 2 oxidized [2Fe-2S]-[ferredoxin] + Na(+)(out) + NADH. Functionally, part of a membrane-bound complex that couples electron transfer with translocation of ions across the membrane. Couples electron transfer from reduced ferredoxin to NAD(+) with electrogenic movement of Na(+) out of the cell. Involved in caffeate respiration. The sequence is that of Na(+)-translocating ferredoxin:NAD(+) oxidoreductase complex subunit C from Acetobacterium woodii (strain ATCC 29683 / DSM 1030 / JCM 2381 / KCTC 1655 / WB1).